Here is a 597-residue protein sequence, read N- to C-terminus: Glypican-3 (597 aa).

The first 24 residues, 1–24 (MAGTVRTACLLVAMLLGLGCLGQA), serve as a signal peptide directing secretion. Gln25 carries the post-translational modification Pyrrolidone carboxylic acid. 7 cysteine pairs are disulfide-bonded: Cys34–Cys71, Cys64–Cys261, Cys72–Cys264, Cys196–Cys348, Cys251–Cys284, Cys273–Cys421, and Cys277–Cys409. 2 N-linked (GlcNAc...) asparagine glycosylation sites follow: Asn123 and Asn240. Ser351 is modified (phosphoserine). Asn417 carries an N-linked (GlcNAc...) asparagine glycan. O-linked (Xyl...) (glycosaminoglycan) serine glycosylation is found at Ser494 and Ser508. The segment at 533-553 (DAPGNKQHGNQKDNEITTSHS) is disordered.

It belongs to the glypican family. As to quaternary structure, heterodimer; disulfide-linked. Cleavage by a furin-like convertase results in production of alpha and beta chains which form a disulfide-linked heterodimer. Interacts with DPP4. Interacts with FGF2. Interacts with WNT5A. Also interacts with WNT3A and WNT7B. Interacts with hedgehog protein SHH; the heparan sulfate chains are not required for the interaction. Also interacts with hedgehog protein IHH. Interacts with CD81. Interacts with Wnt receptors FZD4, FZD7 and FZD8; the heparan sulfate chains are required for the interaction. In terms of processing, O-glycosylated; contains heparan sulfate and/or chondroitin sulfate. Post-translationally, cleaved intracellularly by a furin-like convertase to generate 2 subunits, alpha and beta, which remain associated through disulfide bonds and are associated with the cell surface via the GPI-anchor. This processing is essential for its role in inhibition of hedgehog signaling. A second proteolytic event may result in cleavage of the protein on the cell surface, separating it from the GPI-anchor and leading to its shedding from the cell surface.

The protein localises to the cell membrane. Cell surface proteoglycan. Negatively regulates the hedgehog signaling pathway when attached via the GPI-anchor to the cell surface by competing with the hedgehog receptor PTC1 for binding to hedgehog proteins. Binding to the hedgehog protein SHH triggers internalization of the complex by endocytosis and its subsequent lysosomal degradation. Positively regulates the canonical Wnt signaling pathway by binding to the Wnt receptor Frizzled and stimulating the binding of the Frizzled receptor to Wnt ligands. Positively regulates the non-canonical Wnt signaling pathway. Binds to CD81 which decreases the availability of free CD81 for binding to the transcriptional repressor HHEX, resulting in nuclear translocation of HHEX and transcriptional repression. Inhibits the dipeptidyl peptidase activity of DPP4. Plays a role in limb patterning and skeletal development by controlling the cellular response to BMP4. Modulates the effects of growth factors BMP2, BMP7 and FGF7 on renal branching morphogenesis. Required for coronary vascular development. Plays a role in regulating cell movements during gastrulation. The polypeptide is Glypican-3 (Gpc3) (Rattus norvegicus (Rat)).